A 216-amino-acid polypeptide reads, in one-letter code: N-(5'-phosphoribosyl)anthranilate isomerase (216 aa).

The protein belongs to the TrpF family.

It carries out the reaction N-(5-phospho-beta-D-ribosyl)anthranilate = 1-(2-carboxyphenylamino)-1-deoxy-D-ribulose 5-phosphate. The protein operates within amino-acid biosynthesis; L-tryptophan biosynthesis; L-tryptophan from chorismate: step 3/5. This Leptospira borgpetersenii serovar Hardjo-bovis (strain JB197) protein is N-(5'-phosphoribosyl)anthranilate isomerase.